The following is a 26-amino-acid chain: Peroxidase 1 (26 aa).

Residue Asp-15 participates in Ca(2+) binding.

It belongs to the peroxidase family. Classical plant (class III) peroxidase subfamily. Requires heme b as cofactor. It depends on Ca(2+) as a cofactor.

Its subcellular location is the secreted. It catalyses the reaction 2 a phenolic donor + H2O2 = 2 a phenolic radical donor + 2 H2O. In terms of biological role, removal of H(2)O(2), oxidation of toxic reductants, biosynthesis and degradation of lignin, suberization, auxin catabolism, response to environmental stresses such as wounding, pathogen attack and oxidative stress. These functions might be dependent on each isozyme/isoform in each plant tissue. In Vitis vinifera (Grape), this protein is Peroxidase 1.